The chain runs to 89 residues: Small ribosomal subunit protein bS20 (89 aa).

The protein belongs to the bacterial ribosomal protein bS20 family.

Functionally, binds directly to 16S ribosomal RNA. The sequence is that of Small ribosomal subunit protein bS20 from Stenotrophomonas maltophilia (strain K279a).